A 384-amino-acid chain; its full sequence is Bifunctional enzyme IspD/IspF (384 aa).

The segment at 1–226 (MAKTVVLVVA…RCLFDGPGEV (226 aa)) is 2-C-methyl-D-erythritol 4-phosphate cytidylyltransferase. Residues 227-384 (RSASGYDVHR…QAMASVWLPR (158 aa)) are 2-C-methyl-D-erythritol 2,4-cyclodiphosphate synthase. A divalent metal cation-binding residues include Asp233 and His235. 4-CDP-2-C-methyl-D-erythritol 2-phosphate is bound by residues 233-235 (DVH) and 260-261 (HS). Residue His268 coordinates a divalent metal cation. 4-CDP-2-C-methyl-D-erythritol 2-phosphate contacts are provided by residues 282-284 (DIG), 358-361 (TTTE), Phe365, and Arg368.

In the N-terminal section; belongs to the IspD/TarI cytidylyltransferase family. IspD subfamily. It in the C-terminal section; belongs to the IspF family. The cofactor is a divalent metal cation.

The catalysed reaction is 2-C-methyl-D-erythritol 4-phosphate + CTP + H(+) = 4-CDP-2-C-methyl-D-erythritol + diphosphate. It carries out the reaction 4-CDP-2-C-methyl-D-erythritol 2-phosphate = 2-C-methyl-D-erythritol 2,4-cyclic diphosphate + CMP. The protein operates within isoprenoid biosynthesis; isopentenyl diphosphate biosynthesis via DXP pathway; isopentenyl diphosphate from 1-deoxy-D-xylulose 5-phosphate: step 2/6. Its pathway is isoprenoid biosynthesis; isopentenyl diphosphate biosynthesis via DXP pathway; isopentenyl diphosphate from 1-deoxy-D-xylulose 5-phosphate: step 4/6. Bifunctional enzyme that catalyzes the formation of 4-diphosphocytidyl-2-C-methyl-D-erythritol from CTP and 2-C-methyl-D-erythritol 4-phosphate (MEP) (IspD), and catalyzes the conversion of 4-diphosphocytidyl-2-C-methyl-D-erythritol 2-phosphate (CDP-ME2P) to 2-C-methyl-D-erythritol 2,4-cyclodiphosphate (ME-CPP) with a corresponding release of cytidine 5-monophosphate (CMP) (IspF). This chain is Bifunctional enzyme IspD/IspF, found in Paramagnetospirillum magneticum (strain ATCC 700264 / AMB-1) (Magnetospirillum magneticum).